Here is a 156-residue protein sequence, read N- to C-terminus: 3-hydroxyacyl-[acyl-carrier-protein] dehydratase FabZ (156 aa).

H57 is a catalytic residue.

The protein belongs to the thioester dehydratase family. FabZ subfamily.

The protein resides in the cytoplasm. The catalysed reaction is a (3R)-hydroxyacyl-[ACP] = a (2E)-enoyl-[ACP] + H2O. Functionally, involved in unsaturated fatty acids biosynthesis. Catalyzes the dehydration of short chain beta-hydroxyacyl-ACPs and long chain saturated and unsaturated beta-hydroxyacyl-ACPs. The chain is 3-hydroxyacyl-[acyl-carrier-protein] dehydratase FabZ from Anaeromyxobacter sp. (strain K).